The following is a 151-amino-acid chain: Aspartate carbamoyltransferase regulatory chain (151 aa).

Zn(2+) contacts are provided by Cys107, Cys112, Cys135, and Cys138.

The protein belongs to the PyrI family. In terms of assembly, contains catalytic and regulatory chains. The cofactor is Zn(2+).

Involved in allosteric regulation of aspartate carbamoyltransferase. This chain is Aspartate carbamoyltransferase regulatory chain, found in Thermococcus onnurineus (strain NA1).